Reading from the N-terminus, the 1188-residue chain is DNA-directed RNA polymerase subunit beta (1188 aa).

A disordered region spans residues 1149–1188 (ELRDLDEGEDDDVMHVDDLEKAREKQAQETPEVSENSEEK). A compositionally biased stretch (basic and acidic residues) spans 1161–1175 (VMHVDDLEKAREKQA).

It belongs to the RNA polymerase beta chain family. As to quaternary structure, the RNAP catalytic core consists of 2 alpha, 1 beta, 1 beta' and 1 omega subunit. When a sigma factor is associated with the core the holoenzyme is formed, which can initiate transcription.

The catalysed reaction is RNA(n) + a ribonucleoside 5'-triphosphate = RNA(n+1) + diphosphate. Its function is as follows. DNA-dependent RNA polymerase catalyzes the transcription of DNA into RNA using the four ribonucleoside triphosphates as substrates. The polypeptide is DNA-directed RNA polymerase subunit beta (Streptococcus uberis (strain ATCC BAA-854 / 0140J)).